The chain runs to 122 residues: Large ribosomal subunit protein uL14 (122 aa).

Belongs to the universal ribosomal protein uL14 family. As to quaternary structure, part of the 50S ribosomal subunit. Forms a cluster with proteins L3 and L19. In the 70S ribosome, L14 and L19 interact and together make contacts with the 16S rRNA in bridges B5 and B8.

In terms of biological role, binds to 23S rRNA. Forms part of two intersubunit bridges in the 70S ribosome. This Natranaerobius thermophilus (strain ATCC BAA-1301 / DSM 18059 / JW/NM-WN-LF) protein is Large ribosomal subunit protein uL14.